A 291-amino-acid chain; its full sequence is ATP synthase subunit a (291 aa).

The next 5 helical transmembrane spans lie at I48–W68, I108–I128, D161–I181, L241–W261, and A262–V282.

The protein belongs to the ATPase A chain family. F-type ATPases have 2 components, CF(1) - the catalytic core - and CF(0) - the membrane proton channel. CF(1) has five subunits: alpha(3), beta(3), gamma(1), delta(1), epsilon(1). CF(0) has three main subunits: a(1), b(2) and c(9-12). The alpha and beta chains form an alternating ring which encloses part of the gamma chain. CF(1) is attached to CF(0) by a central stalk formed by the gamma and epsilon chains, while a peripheral stalk is formed by the delta and b chains.

Its subcellular location is the cell inner membrane. Functionally, key component of the proton channel; it plays a direct role in the translocation of protons across the membrane. In Acinetobacter baylyi (strain ATCC 33305 / BD413 / ADP1), this protein is ATP synthase subunit a.